Consider the following 314-residue polypeptide: PDZ domain-containing protein GIPC2 (314 aa).

The span at 1 to 12 (MPLGLRGKKKAA) shows a compositional bias: basic residues. Residues 1-36 (MPLGLRGKKKAAKSKEAARLVEGERSSGSQGVPGPP) are disordered. Over residues 13 to 25 (KSKEAARLVEGER) the composition is skewed to basic and acidic residues. The 81-residue stretch at 117–197 (EVNVYKSEDS…EELFTLQLIE (81 aa)) folds into the PDZ domain.

Belongs to the GIPC family. As to quaternary structure, probably interacts with SEMA5A. In terms of tissue distribution, expressed in kidney and lung (at protein level).

It localises to the cytoplasm. This Mus musculus (Mouse) protein is PDZ domain-containing protein GIPC2 (Gipc2).